Consider the following 196-residue polypeptide: UPF0319 protein VV1_0237 (196 aa).

A signal peptide spans 1 to 19; it reads MKKMMILSALALFSSSLFA.

This sequence belongs to the UPF0319 family.

This Vibrio vulnificus (strain CMCP6) protein is UPF0319 protein VV1_0237.